The chain runs to 256 residues: Imidazole glycerol phosphate synthase subunit HisF (256 aa).

Residues Asp11 and Asp130 contribute to the active site.

This sequence belongs to the HisA/HisF family. As to quaternary structure, heterodimer of HisH and HisF.

Its subcellular location is the cytoplasm. The catalysed reaction is 5-[(5-phospho-1-deoxy-D-ribulos-1-ylimino)methylamino]-1-(5-phospho-beta-D-ribosyl)imidazole-4-carboxamide + L-glutamine = D-erythro-1-(imidazol-4-yl)glycerol 3-phosphate + 5-amino-1-(5-phospho-beta-D-ribosyl)imidazole-4-carboxamide + L-glutamate + H(+). The protein operates within amino-acid biosynthesis; L-histidine biosynthesis; L-histidine from 5-phospho-alpha-D-ribose 1-diphosphate: step 5/9. Functionally, IGPS catalyzes the conversion of PRFAR and glutamine to IGP, AICAR and glutamate. The HisF subunit catalyzes the cyclization activity that produces IGP and AICAR from PRFAR using the ammonia provided by the HisH subunit. This Prochlorococcus marinus (strain NATL2A) protein is Imidazole glycerol phosphate synthase subunit HisF.